The following is a 355-amino-acid chain: MTELKNDRYLRALLKQPVDYTPVWMMRQAGRYLPEYRATRAQAGDFMALCKNAELASEVTLQPLRRFPLDAAILFSDILTIPDAMGLGLRFAAGEGPVFERPITCKADVDKIGIPDPEGELQYVMNAVRQIRKDLQGEVPLIGFSGSPWTLATYMVEGGSSKAFTKIKKMMYSEPTVLHALLDKLADSVISYLNAQIKAGAQAVMVFDTWGGVLTPRDYQQFSLQYMHKIVDGLIRENEGRRVPVTLFTKNGGMWLEQIAATGCDAVGLDWTINIADAKARVGDKVALQGNMDPSILYAPAPRIREEVASILAGFGQGGTGHVFNLGHGIHLDVPPENAGVFVEAVHELSKPYHP.

Substrate is bound by residues 27-31, Asp-77, Tyr-154, Thr-209, and His-328; that span reads RQAGR.

The protein belongs to the uroporphyrinogen decarboxylase family. Homodimer.

The protein localises to the cytoplasm. It catalyses the reaction uroporphyrinogen III + 4 H(+) = coproporphyrinogen III + 4 CO2. The protein operates within porphyrin-containing compound metabolism; protoporphyrin-IX biosynthesis; coproporphyrinogen-III from 5-aminolevulinate: step 4/4. Its function is as follows. Catalyzes the decarboxylation of four acetate groups of uroporphyrinogen-III to yield coproporphyrinogen-III. In Vibrio cholerae serotype O1 (strain ATCC 39541 / Classical Ogawa 395 / O395), this protein is Uroporphyrinogen decarboxylase.